A 141-amino-acid chain; its full sequence is ATP synthase epsilon chain (141 aa).

It belongs to the ATPase epsilon chain family. F-type ATPases have 2 components, CF(1) - the catalytic core - and CF(0) - the membrane proton channel. CF(1) has five subunits: alpha(3), beta(3), gamma(1), delta(1), epsilon(1). CF(0) has three main subunits: a, b and c.

The protein localises to the cell membrane. Functionally, produces ATP from ADP in the presence of a proton gradient across the membrane. This is ATP synthase epsilon chain from Lactococcus lactis subsp. lactis (strain IL1403) (Streptococcus lactis).